The following is a 570-amino-acid chain: Protein mom-5 (570 aa).

Positions 1-16 (MHRHILILFLFGCLSA) are cleaved as a signal peptide. Residues 17-230 (DQRLSSTSIS…FDGRVRRILR (214 aa)) are Extracellular-facing. One can recognise an FZ domain in the interval 32–148 (STTRKCEHIT…FPVTDLCVGK (117 aa)). 5 cysteine pairs are disulfide-bonded: Cys37/Cys98, Cys45/Cys91, Cys82/Cys119, Cys108/Cys145, and Cys112/Cys136. Asn51 carries an N-linked (GlcNAc...) asparagine glycan. Asn149 carries N-linked (GlcNAc...) asparagine glycosylation. A helical transmembrane segment spans residues 231-251 (IWTAAWSVACFVCSLFTLVTF). Topologically, residues 252 to 264 (LVDLSRFAYPVRP) are cytoplasmic. A helical transmembrane segment spans residues 265–285 (ILYLAFCYLAISTVYMIGVVG). The Extracellular portion of the chain corresponds to 286–319 (EDGFACGTYGSTPTTLVTQGGENVGCSALAVVHY). A helical transmembrane segment spans residues 320 to 340 (FFFMSSCAWWLVLCLAWFLAA). Residues 341-348 (NLKWGAES) are Cytoplasmic-facing. Residues 349–369 (IAALSPYFHAMCWGVPAVLSV) form a helical membrane-spanning segment. Residues 370 to 395 (TVLVTNSVDGDVFTGICSVGNLNPSA) lie on the Extracellular side of the membrane. Residues 396–416 (LVYFFFTPIVVSLALGAVLLV) traverse the membrane as a helical segment. At 417–449 (CGIWSMIRIRSYIKLQHADVERNISKLEKLMLR) the chain is on the cytoplasmic side. Residues 450-470 (IGAFAIMYSLPTAMNAAIMWY) form a helical membrane-spanning segment. Residues 471 to 515 (QAVNMPAWLEGWLHHRCVRLQDRELFGFTYPVDDCPMDPKVAAPE) lie on the Extracellular side of the membrane. The chain crosses the membrane as a helical span at residues 516–536 (IIVFLLKYVSQLVVGITCAIW). Residues 537–570 (VVSSKTLSSYHKAYLALSSRSPTVPAHVDQVNMR) lie on the Cytoplasmic side of the membrane.

Belongs to the G-protein coupled receptor Fz/Smo family.

The protein resides in the cell membrane. Its subcellular location is the early endosome. Its function is as follows. Receptor for Wnt proteins. Most frizzled receptors are coupled to the beta-catenin canonical signaling pathway, which leads to the activation of disheveled proteins, inhibition of gsk-3 kinase, nuclear accumulation of beta-catenin and activation of Wnt target genes. A second signaling pathway involving PKC and calcium fluxes has been seen for some family members, but it is not yet clear if it represents a distinct pathway or if it can be integrated in the canonical pathway, as pkc seems to be required for Wnt-mediated inactivation of gsk-3 kinase. Both pathways seem to involve interactions with G-proteins. Required in embryonic development for the correct positioning and orientation of the mitotic spindles and division planes in blastomere cells. During early embryonic cell divisions, directs the asymmetric positioning of transcription factors such as pop-1 and dsh-2 in daughter cells in order to determine cell fate specification. Acts redundantly with other Wnt receptors such as lin-17 to control vulval precursor cell specification and also the polarity of different cell types including distal tip cells, seam cells, AVG interneurons and P-cells and their descendants. Plays a role in the migration of cell types including distal tip cells and the QR neuroblast descendants, QR.p and QR.pa during larval development. Negatively regulates the unc-6/Netrin receptors unc-5 and unc-40 to control distal tip cell polarity and migration. Acts through ced-5/DOCK180 and ced-10/Rac to control both distal tip cell migration and the phagocytic clearance of apoptotic cell corpses. Furthermore, it is also required for the migration and axon guidance of the different neuronal cell types including CAN, ALM, HSN and the two mechanosensory neurons AVM and PVM. Mediates Wnt receptor cfz-2 in directing ALM migration, but may also act redundantly with the Wnt receptors cfz-2 and mig-1 to direct the migration of other neuronal cell types including CAN and HSN. Mediates Wnt ligand egl-20 in the control of the anterior-posterior axon guidance of AVM and PVM neurons. This is Protein mom-5 from Caenorhabditis elegans.